The chain runs to 1432 residues: ABC transporter asL7 (1432 aa).

Polar residues predominate over residues 1–20; the sequence is MFDTTKLQSSTQDGSTSSVT. The segment at 1–36 is disordered; the sequence is MFDTTKLQSSTQDGSTSSVTGEPIFGANDPNSELNP. One can recognise an ABC transporter 1 domain in the interval 91 to 341; it reads LALPGMLIRN…FERLGFECPS (251 aa). Asparagine 265 carries an N-linked (GlcNAc...) asparagine glycan. 6 helical membrane-spanning segments follow: residues 450–470, 484–504, 530–550, 559–579, 597–617, and 702–722; these read PTIVVTMGNFVLALIMSSLFF, VVLFMAVMFNAFASVLEVMTL, VLMDLPIKVLACVSFNLVFYF, GNFFFYLLASFFIVLSMSGIF, MIPASILMVFLITFAGFMVPI, and IGIVIAMTIFNYTMCFITSEY. One can recognise an ABC transporter 2 domain in the interval 786–1029; sequence FHWRNVCYDI…TLVEYFERKA (244 aa). Position 822 to 829 (822 to 829) interacts with ATP; sequence GVSGAGKT. N-linked (GlcNAc...) asparagine glycosylation is present at asparagine 1017. The interval 1076–1095 is disordered; that stretch reads LSRLREHGSQSNSHDSEKSE. 6 helical membrane passes run 1135–1155, 1166–1186, 1215–1235, 1251–1271, 1279–1299, and 1317–1337; these read FALCGVVSLFIGLVFLNSPLS, VFQLFAIVGQLVSQQMPQFII, IPYYALASVMMWALWYFPIGL, LMWLLFLAWLMWVSTFGHFCI, AGANAANFMYVLVNFFCGALI, and LSYLVSSMLSAGIANVEVTCA. Asparagine 1371 carries N-linked (GlcNAc...) asparagine glycosylation. The helical transmembrane segment at 1402 to 1422 threads the bilayer; that stretch reads FGIIWVYVIFNISAAITLYWV.

Belongs to the ABC transporter superfamily. ABCG family. PDR (TC 3.A.1.205) subfamily.

The protein resides in the cell membrane. ABC transporter; part of the gene cluster that mediates the biosynthesis of xenovulene A, an unusual meroterpenoid that has potent inhibitory effects on the human gamma-aminobutyrate A (GABAA) benzodiazepine receptor. This is ABC transporter asL7 from Sarocladium schorii (Acremonium strictum (strain IMI 501407)).